A 505-amino-acid polypeptide reads, in one-letter code: Histidine ammonia-lyase (505 aa).

The 5-imidazolinone (Ala-Gly) cross-link spans A141–G143. S142 carries the 2,3-didehydroalanine (Ser) modification.

Belongs to the PAL/histidase family. Post-translationally, contains an active site 4-methylidene-imidazol-5-one (MIO), which is formed autocatalytically by cyclization and dehydration of residues Ala-Ser-Gly.

It localises to the cytoplasm. The catalysed reaction is L-histidine = trans-urocanate + NH4(+). It functions in the pathway amino-acid degradation; L-histidine degradation into L-glutamate; N-formimidoyl-L-glutamate from L-histidine: step 1/3. The sequence is that of Histidine ammonia-lyase from Bacillus cereus (strain G9842).